A 267-amino-acid chain; its full sequence is Putative glycosyltransferase 63 (267 aa).

Belongs to the glycosyltransferase group 1 family. Glycosyltransferase 4 subfamily.

This chain is Putative glycosyltransferase 63 (SIFV0063), found in Sulfolobus islandicus filamentous virus (isolate Iceland/Hveragerdi) (SIFV).